The chain runs to 469 residues: D-3-phosphoglycerate dehydrogenase 1 (469 aa).

A phosphoserine mark is found at serine 22, serine 29, and serine 33. NAD(+)-binding positions include 208-209 (HI), aspartate 228, 285-287 (ASR), and aspartate 311. Arginine 287 is a catalytic residue. Glutamate 316 is a catalytic residue. The Proton donor role is filled by histidine 347. Residue 347 to 350 (HIGG) coordinates NAD(+). The ACT domain maps to 399–469 (RVLYIHQNVP…SAKISIRLLY (71 aa)).

The protein belongs to the D-isomer specific 2-hydroxyacid dehydrogenase family.

It catalyses the reaction (2R)-3-phosphoglycerate + NAD(+) = 3-phosphooxypyruvate + NADH + H(+). It carries out the reaction (R)-2-hydroxyglutarate + NAD(+) = 2-oxoglutarate + NADH + H(+). It functions in the pathway amino-acid biosynthesis; L-serine biosynthesis; L-serine from 3-phospho-D-glycerate: step 1/3. Its function is as follows. Catalyzes the reversible oxidation of 3-phospho-D-glycerate to 3-phosphonooxypyruvate, the first step of the phosphorylated L-serine biosynthesis pathway. Also catalyzes the reversible oxidation of 2-hydroxyglutarate to 2-oxoglutarate. This is D-3-phosphoglycerate dehydrogenase 1 (SER3) from Saccharomyces cerevisiae (strain ATCC 204508 / S288c) (Baker's yeast).